A 539-amino-acid polypeptide reads, in one-letter code: Nucleobase-ascorbate transporter 8 (539 aa).

The segment at 1-20 (MAGDGVENAKPPQKQEDLQP) is disordered. The next 12 membrane-spanning stretches (helical) occupy residues 44-64 (ILLGFQHYLVMLGTTVLIPTM), 79-99 (LIQTLLFVSGINTLFQSFFGT), 101-121 (LPAVIGASYSYVPTTMSIVLA), 141-161 (IQGALIIASFLHILVGFSGLW), 167-187 (FLSPLSAVPLVAFSGFGLYEQ), 189-209 (FPMLAKCIEIGLPEIILLVIF), 229-249 (FAVIFSVVIVWLYAYILTIGG), 295-315 (IFAMMAASFVSLVESTGTYIA), 368-388 (VGSRRVIQVAAGFMIFFSILG), 399-421 (APIVAALYCLFFSYVGAGGLSLI), 433-453 (FILGFSIFMGLSIPQYFYQYT), and 470-490 (NIINVPFSSKAFVSGILAFFL).

The protein belongs to the nucleobase:cation symporter-2 (NCS2) (TC 2.A.40) family. As to expression, highly expressed in ovules, endosperm and embryo.

Its subcellular location is the cell membrane. This chain is Nucleobase-ascorbate transporter 8 (NAT8), found in Arabidopsis thaliana (Mouse-ear cress).